Consider the following 276-residue polypeptide: Undecaprenyl-diphosphatase (276 aa).

The next 5 membrane-spanning stretches (helical) occupy residues 84 to 104 (YRLG…GLFF), 115 to 135 (LWVV…AEYV), 188 to 208 (FGFL…LPDA), 222 to 242 (QLLV…AWLL), and 250 to 270 (MYWF…LLAT).

This sequence belongs to the UppP family.

It is found in the cell membrane. It carries out the reaction di-trans,octa-cis-undecaprenyl diphosphate + H2O = di-trans,octa-cis-undecaprenyl phosphate + phosphate + H(+). Functionally, catalyzes the dephosphorylation of undecaprenyl diphosphate (UPP). Confers resistance to bacitracin. The polypeptide is Undecaprenyl-diphosphatase (Mycobacterium bovis (strain ATCC BAA-935 / AF2122/97)).